Reading from the N-terminus, the 2195-residue chain is Genome polyprotein (2195 aa).

Gly2 carries N-myristoyl glycine; by host lipidation. Residues 2–1505 (GAQVSTQKTG…HVSRAFICLQ (1504 aa)) are Cytoplasmic-facing. The tract at residues 567-583 (LLQGDVVEAVENAVARV) is amphipathic alpha-helix. Residues His882 and Asp900 each act as for protease 2A activity in the active site. Zn(2+) contacts are provided by Cys917 and Cys919. The active-site For protease 2A activity is the Cys971. Zn(2+)-binding residues include Cys977 and His979. The interval 1111-1183 (NNGWLKKFTE…EQSAPSQSDQ (73 aa)) is membrane-binding. Residues 1111 to 1249 (NNGWLKKFTE…SPGAGKSVAT (139 aa)) form an oligomerization region. The tract at residues 1132–1136 (SIKIQ) is RNA-binding. Residues 1215-1371 (EKKMSNYIQF…SMYSQNGKIN (157 aa)) form the SF3 helicase domain. Residues Cys1379, Cys1391, and Cys1396 each contribute to the Zn(2+) site. The C4-type; degenerate zinc-finger motif lies at 1379-1396 (CDEECCPVNFKRCCPLVC). An RNA-binding region spans residues 1423–1430 (EYNHRHSV). Residues 1434 to 1439 (LEALFQ) form an oligomerization region. The stretch at 1506 to 1521 (ALTTFVSVAGIIYIIY) is an intramembrane region. Topologically, residues 1522–2195 (KLFAGFQGAY…TLRRKWLDSF (674 aa)) are cytoplasmic. An O-(5'-phospho-RNA)-tyrosine modification is found at Tyr1531. The Peptidase C3 domain occupies 1551 to 1729 (GPAFEFAVAM…FSAALLKHYF (179 aa)). Active-site for protease 3C activity residues include His1590, Glu1621, and Cys1697. Residues 1960–2076 (GHLIAFDYSG…SYPWPIDASL (117 aa)) form the RdRp catalytic domain. 2 residues coordinate Mg(2+): Asp1966 and Asp2062.

This sequence belongs to the picornaviruses polyprotein family. In terms of assembly, interacts with capsid protein VP1 and capsid protein VP3 to form heterotrimeric protomers. As to quaternary structure, interacts with capsid protein VP0, and capsid protein VP3 to form heterotrimeric protomers. Five protomers subsequently associate to form pentamers which serve as building blocks for the capsid. Interacts with capsid protein VP2, capsid protein VP3 and capsid protein VP4 following cleavage of capsid protein VP0. Interacts with capsid protein VP1 and capsid protein VP3 in the mature capsid. In terms of assembly, interacts with capsid protein VP0 and capsid protein VP1 to form heterotrimeric protomers. Five protomers subsequently associate to form pentamers which serve as building blocks for the capsid. Interacts with capsid protein VP4 in the mature capsid. Interacts with protein 2C; this interaction may be important for virion morphogenesis. As to quaternary structure, interacts with capsid protein VP1 and capsid protein VP3. Homodimer. In terms of assembly, homohexamer; forms a hexameric ring structure with 6-fold symmetry characteristic of AAA+ ATPases. Interacts (via N-terminus) with host RTN3 (via reticulon domain); this interaction is important for viral replication. Interacts with capsid protein VP3; this interaction may be important for virion morphogenesis. As to quaternary structure, interacts with protein 3CD. Homodimer. Interacts with host GBF1. Interacts (via GOLD domain) with host ACBD3 (via GOLD domain); this interaction allows the formation of a viral protein 3A/ACBD3 heterotetramer with a 2:2 stoichiometry, which will stimulate the recruitment of host PI4KB in order to synthesize PI4P at the viral RNA replication sites. In terms of assembly, interacts with RNA-directed RNA polymerase. As to quaternary structure, interacts with protein 3AB and with RNA-directed RNA polymerase. Interacts with Viral protein genome-linked and with protein 3CD. Mg(2+) serves as cofactor. Specific enzymatic cleavages in vivo by the viral proteases yield processing intermediates and the mature proteins. Post-translationally, myristoylation is required for the formation of pentamers during virus assembly. Further assembly of 12 pentamers and a molecule of genomic RNA generates the provirion. In terms of processing, during virion maturation, immature virions are rendered infectious following cleavage of VP0 into VP4 and VP2. This maturation seems to be an autocatalytic event triggered by the presence of RNA in the capsid and it is followed by a conformational change infectious virion. Myristoylation is required during RNA encapsidation and formation of the mature virus particle. Post-translationally, VPg is uridylylated by the polymerase into VPg-pUpU. This acts as a nucleotide-peptide primer for the genomic RNA replication.

It localises to the virion. Its subcellular location is the host cytoplasm. It is found in the host cytoplasmic vesicle membrane. The protein resides in the host nucleus. It catalyses the reaction a ribonucleoside 5'-triphosphate + H2O = a ribonucleoside 5'-diphosphate + phosphate + H(+). It carries out the reaction Selective cleavage of Tyr-|-Gly bond in the picornavirus polyprotein.. The catalysed reaction is RNA(n) + a ribonucleoside 5'-triphosphate = RNA(n+1) + diphosphate. The enzyme catalyses Selective cleavage of Gln-|-Gly bond in the poliovirus polyprotein. In other picornavirus reactions Glu may be substituted for Gln, and Ser or Thr for Gly.. Replication or transcription is subject to high level of random mutations by the nucleotide analog ribavirin. In terms of biological role, forms an icosahedral capsid of pseudo T=3 symmetry with capsid proteins VP2 and VP3. The capsid is 300 Angstroms in diameter, composed of 60 copies of each capsid protein and enclosing the viral positive strand RNA genome. Capsid protein VP1 mainly forms the vertices of the capsid. Capsid protein VP1 interacts with host cell receptor to provide virion attachment to target host cells. This attachment induces virion internalization. Tyrosine kinases are probably involved in the entry process. After binding to its receptor, the capsid undergoes conformational changes. Capsid protein VP1 N-terminus (that contains an amphipathic alpha-helix) and capsid protein VP4 are externalized. Together, they shape a pore in the host membrane through which viral genome is translocated to host cell cytoplasm. Its function is as follows. Forms an icosahedral capsid of pseudo T=3 symmetry with capsid proteins VP2 and VP3. The capsid is 300 Angstroms in diameter, composed of 60 copies of each capsid protein and enclosing the viral positive strand RNA genome. Functionally, lies on the inner surface of the capsid shell. After binding to the host receptor, the capsid undergoes conformational changes. Capsid protein VP4 is released, Capsid protein VP1 N-terminus is externalized, and together, they shape a pore in the host membrane through which the viral genome is translocated into the host cell cytoplasm. Component of immature procapsids, which is cleaved into capsid proteins VP4 and VP2 after maturation. Allows the capsid to remain inactive before the maturation step. In terms of biological role, cysteine protease that cleaves viral polyprotein and specific host proteins. It is responsible for the autocatalytic cleavage between the P1 and P2 regions, which is the first cleavage occurring in the polyprotein. Also cleaves the host translation initiation factor EIF4G1, in order to shut down the capped cellular mRNA translation. Inhibits the host nucleus-cytoplasm protein and RNA trafficking by cleaving host members of the nuclear pores. Counteracts stress granule formation probably by antagonizing its assembly or promoting its dissassembly. Its function is as follows. Plays an essential role in the virus replication cycle by acting as a viroporin. Creates a pore in the host endoplasmic reticulum and as a consequence releases Ca2+ in the cytoplasm of infected cell. In turn, high levels of cytoplasmic calcium may trigger membrane trafficking and transport of viral ER-associated proteins to viroplasms, sites of viral genome replication. Functionally, induces and associates with structural rearrangements of intracellular membranes. Displays RNA-binding, nucleotide binding and NTPase activities. May play a role in virion morphogenesis and viral RNA encapsidation by interacting with the capsid protein VP3. Localizes the viral replication complex to the surface of membranous vesicles. Together with protein 3CD binds the Cis-Active RNA Element (CRE) which is involved in RNA synthesis initiation. Acts as a cofactor to stimulate the activity of 3D polymerase, maybe through a nucleid acid chaperone activity. In terms of biological role, localizes the viral replication complex to the surface of membranous vesicles. It inhibits host cell endoplasmic reticulum-to-Golgi apparatus transport and causes the disassembly of the Golgi complex, possibly through GBF1 interaction. This would result in depletion of MHC, trail receptors and IFN receptors at the host cell surface. Plays an essential role in viral RNA replication by recruiting ACBD3 and PI4KB at the viral replication sites, thereby allowing the formation of the rearranged membranous structures where viral replication takes place. Its function is as follows. Acts as a primer for viral RNA replication and remains covalently bound to viral genomic RNA. VPg is uridylylated prior to priming replication into VPg-pUpU. The oriI viral genomic sequence may act as a template for this. The VPg-pUpU is then used as primer on the genomic RNA poly(A) by the RNA-dependent RNA polymerase to replicate the viral genome. During genome replication, the VPg-RNA linkage is removed by the host TDP2, thereby accelerating replication. During the late stage of the replication cycle, host TDP2 is excluded from sites of viral RNA synthesis and encapsidation, allowing for the generation of progeny virions. Functionally, involved in the viral replication complex and viral polypeptide maturation. It exhibits protease activity with a specificity and catalytic efficiency that is different from protease 3C. Protein 3CD lacks polymerase activity. The 3C domain in the context of protein 3CD may have an RNA binding activity. Protein 3CD binds to the 5'UTR of the viral genome. Replicates the viral genomic RNA on the surface of intracellular membranes. May form linear arrays of subunits that propagate along a strong head-to-tail interaction called interface-I. Covalently attaches UMP to a tyrosine of VPg, which is used to prime RNA synthesis. The positive stranded RNA genome is first replicated at virus induced membranous vesicles, creating a dsRNA genomic replication form. This dsRNA is then used as template to synthesize positive stranded RNA genomes. ss(+)RNA genomes are either translated, replicated or encapsidated. In terms of biological role, major viral protease that mediates proteolytic processing of the polyprotein. Cleaves host EIF5B, contributing to host translation shutoff. Also cleaves host PABPC1, contributing to host translation shutoff. Cleaves host NLRP1, triggers host N-glycine-mediated degradation of the autoinhibitory NLRP1 N-terminal fragment. The protein is Genome polyprotein of Echovirus 11 (strain Gregory).